The following is a 497-amino-acid chain: uncharacterized protein (497 aa).

Positions 1–16 (MSTTTETVTWSQYKPQ) are enriched in polar residues. Positions 1-29 (MSTTTETVTWSQYKPQETQRRLSRSSTIT) are disordered. S64 is modified (phosphoserine). 6 helical membrane passes run 86-106 (IALV…ALPI), 120-140 (FSGL…YPML), 155-175 (FRPL…YSLA), 180-200 (WLYL…MFLY), 222-242 (LNIL…GILA), and 258-278 (AGSW…SIFF). S295 is subject to Phosphoserine. The next 6 membrane-spanning stretches (helical) occupy residues 309–329 (FMLC…AGYQ), 348–368 (GNFL…STFL), 377–397 (IMLY…VLDA), 407–427 (FVLY…LVSL), 443–463 (VVQV…GAIF), and 468–488 (VGFI…LLYL).

Its subcellular location is the membrane. This is an uncharacterized protein from Schizosaccharomyces pombe (strain 972 / ATCC 24843) (Fission yeast).